We begin with the raw amino-acid sequence, 289 residues long: Diaminopimelate epimerase (289 aa).

Asparagine 15 and asparagine 76 together coordinate substrate. The active-site Proton donor is cysteine 85. Substrate is bound by residues 86–87 (GN), asparagine 158, asparagine 191, and 209–210 (ER). The active-site Proton acceptor is the cysteine 218. Substrate is bound at residue 219–220 (GT).

It belongs to the diaminopimelate epimerase family. In terms of assembly, homodimer.

It is found in the cytoplasm. The enzyme catalyses (2S,6S)-2,6-diaminopimelate = meso-2,6-diaminopimelate. It participates in amino-acid biosynthesis; L-lysine biosynthesis via DAP pathway; DL-2,6-diaminopimelate from LL-2,6-diaminopimelate: step 1/1. Catalyzes the stereoinversion of LL-2,6-diaminopimelate (L,L-DAP) to meso-diaminopimelate (meso-DAP), a precursor of L-lysine and an essential component of the bacterial peptidoglycan. This is Diaminopimelate epimerase from Streptomyces coelicolor (strain ATCC BAA-471 / A3(2) / M145).